A 367-amino-acid chain; its full sequence is Dihydroxyacetone phosphate transaminase Cj1437c (367 aa).

K219 carries the N6-(pyridoxal phosphate)lysine modification.

The protein belongs to the class-II pyridoxal-phosphate-dependent aminotransferase family. It depends on pyridoxal 5'-phosphate as a cofactor.

It carries out the reaction dihydroxyacetone phosphate + L-glutamate = (S)-serinol phosphate + 2-oxoglutarate. Its pathway is capsule biogenesis; capsule polysaccharide biosynthesis. Functionally, pyridoxal phosphate (PLP)-dependent transaminase involved in the biosynthesis of amidated D-glucuronic acid structures found on the capsular polysaccharide (CPS) of C.jejuni. Catalyzes the transamination of dihydroxyacetone phosphate (DHAP) to (S)-serinol phosphate in the presence of L-glutamate. Less active with L-aspartate. No activity with dihydroxyacetone or L-alanine. The protein is Dihydroxyacetone phosphate transaminase Cj1437c of Campylobacter jejuni subsp. jejuni serotype O:2 (strain ATCC 700819 / NCTC 11168).